A 549-amino-acid chain; its full sequence is Mitogen-activated protein kinase 15 (549 aa).

Residues 1–20 form a ubiquitin-conjugating region; the sequence is MCAAEVDRHVAQRYLIKRRL. The 292-residue stretch at 14–305 folds into the Protein kinase domain; it reads YLIKRRLGKG…AEQALQHPYV (292 aa). ATP-binding positions include 20-28 and Lys43; that span reads LGKGAYGIV. Asp138 functions as the Proton acceptor in the catalytic mechanism. At Thr176 the chain carries Phosphothreonine. The short motif at 176 to 178 is the TXY element; that stretch reads TEY. Phosphotyrosine is present on Tyr178. A necessary to interact with ESRRA, to regulate its subcellular localization and to inhibit its transcriptional activity region spans residues 266–286; it reads LDALLPPDTPPEALDLLKRLL. The segment at 301–382 is requires for interaction with GABARAP, MAP1LC3B AND GABARAPL1; it reads QHPYVQRFHC…ARTQSLKSGV (82 aa). Residues 370 to 507 form a disordered region; it reads ASPARTQSLK…PEPRPGRRMF (138 aa). PXXXP motif repeat units lie at residues 380 to 384 and 387 to 391; these read SGVLP and PAETP. 2 PXXXP motif; regulates binding with chromatin and interaction with PCNA repeats span residues 395–399 and 403–407; these read RGPKP and PGHDP. The span at 403 to 416 shows a compositional bias: basic and acidic residues; the sequence is PGHDPEHVEVRRQS. At Arg451 the chain carries Omega-N-methylarginine. Positions 456–467 are enriched in polar residues; sequence SLTSQAEAQAAN. The segment covering 483–492 has biased composition (low complexity); sequence AVGARRVPSR. Positions 493 to 502 are enriched in basic and acidic residues; sequence LPREAPEPRP.

The protein belongs to the protein kinase superfamily. CMGC Ser/Thr protein kinase family. MAP kinase subfamily. Interacts with TGFB1I1. Interacts with CSK/c-Src, ABL1 and RET. Interacts with GABARAP, MAP1LC3B and GABARAPL1; controls, in a kinase-dependent fashion, both basal and starvation-induced autophagy. Interacts with ESRRA; promotes re-localization of ESRRA to the cytoplasm through a XPO1-dependent mechanism then inhibits ESRRA transcriptional activity. Interacts with PCNA; the interaction is chromatin binding- and kinase activity-dependent and prevents MDM2-mediated PCNA destruction by inhibiting the association of PCNA with MDM2. Interacts with DVL2. Interacts with CLIC3; MAPK15 does not phosphorylates CLIC3. In terms of processing, autophosphorylated on Thr-176 and Tyr-178; activates the enzyme. Ubiquitinated. Ubiquitination may allow its tight kinase activity regulation and rapid turnover. May be ubiquitinated by a SCF E3 ligase. In terms of tissue distribution, expressed at all stages of oocyte meiotic maturation.

It is found in the cytoplasm. The protein localises to the cytoskeleton. It localises to the cilium basal body. Its subcellular location is the cell junction. The protein resides in the tight junction. It is found in the microtubule organizing center. The protein localises to the centrosome. It localises to the centriole. Its subcellular location is the cytoplasmic vesicle. The protein resides in the autophagosome. It is found in the golgi apparatus. The protein localises to the nucleus. It localises to the spindle. The catalysed reaction is L-seryl-[protein] + ATP = O-phospho-L-seryl-[protein] + ADP + H(+). It catalyses the reaction L-threonyl-[protein] + ATP = O-phospho-L-threonyl-[protein] + ADP + H(+). Activated by threonine and tyrosine phosphorylation. Inhibited by dual specificity phosphatases, such as DUSP1. Phosphorylation and activation in response to DNA damaging agents, serum stimulation. Constitutively activated when phosphorylated on Tyr-178. Activity depends on the relative rates of MAPK15 autophosphorylation and dephosphorylation by PTPN1. Atypical MAPK protein that regulates several process such as autophagy, ciliogenesis, protein trafficking/secretion and genome integrity, in a kinase activity-dependent manner. Controls both, basal and starvation-induced autophagy throught its interaction with GABARAP, MAP1LC3B and GABARAPL1 leading to autophagosome formation, SQSTM1 degradation and reduced MAP1LC3B inhibitory phosphorylation. Regulates primary cilium formation and the localization of ciliary proteins involved in cilium structure, transport, and signaling. Prevents the relocation of the sugar-adding enzymes from the Golgi to the endoplasmic reticulum, thereby restricting the production of sugar-coated proteins. Upon amino-acid starvation, mediates transitional endoplasmic reticulum site disassembly and inhibition of secretion. Binds to chromatin leading to MAPK15 activation and interaction with PCNA, that which protects genomic integrity by inhibiting MDM2-mediated degradation of PCNA. Regulates DA transporter (DAT) activity and protein expression via activation of RhoA. In response to H(2)O(2) treatment phosphorylates ELAVL1, thus preventing it from binding to the PDCD4 3'UTR and rendering the PDCD4 mRNA accessible to miR-21 and leading to its degradation and loss of protein expression. Also functions in a kinase activity-independent manner as a negative regulator of growth. Phosphorylates in vitro FOS and MBP. During oocyte maturation, plays a key role in the microtubule organization and meiotic cell cycle progression in oocytes, fertilized eggs, and early embryos. Interacts with ESRRA promoting its re-localization from the nucleus to the cytoplasm and then prevents its transcriptional activity. The chain is Mitogen-activated protein kinase 15 from Mus musculus (Mouse).